A 308-amino-acid polypeptide reads, in one-letter code: HTH-type transcriptional activator AllS (308 aa).

One can recognise an HTH lysR-type domain in the interval 2–59 (FDPETLRTFISVAETGSFSKAAERLCKTTATISYRIKLLEENTGVGLFFRTTRSVSLT). Positions 19–38 (FSKAAERLCKTTATISYRIK) form a DNA-binding region, H-T-H motif.

Belongs to the LysR transcriptional regulatory family.

In terms of biological role, positive regulator essential for the expression of allD operon. Binds to the allD promoter. This is HTH-type transcriptional activator AllS (allS) from Salmonella paratyphi A (strain ATCC 9150 / SARB42).